Reading from the N-terminus, the 348-residue chain is Methylthioribose-1-phosphate isomerase (348 aa).

Residues Arg47–Ala49, Arg90, and Gln196 contribute to the substrate site. Asp237 acts as the Proton donor in catalysis. Asn247–Lys248 is a binding site for substrate.

It belongs to the eIF-2B alpha/beta/delta subunits family. MtnA subfamily.

It catalyses the reaction 5-(methylsulfanyl)-alpha-D-ribose 1-phosphate = 5-(methylsulfanyl)-D-ribulose 1-phosphate. Its pathway is amino-acid biosynthesis; L-methionine biosynthesis via salvage pathway; L-methionine from S-methyl-5-thio-alpha-D-ribose 1-phosphate: step 1/6. In terms of biological role, catalyzes the interconversion of methylthioribose-1-phosphate (MTR-1-P) into methylthioribulose-1-phosphate (MTRu-1-P). The polypeptide is Methylthioribose-1-phosphate isomerase (Synechococcus sp. (strain ATCC 27144 / PCC 6301 / SAUG 1402/1) (Anacystis nidulans)).